The following is a 295-amino-acid chain: Probable intramembrane protease C25B8.17 (295 aa).

A helical transmembrane segment spans residues 1 to 21 (MEGVILASSALFTVYIGAKWS). Residues 22–35 (AQEEEPEEKQLINK) lie on the Cytoplasmic side of the membrane. The helical transmembrane segment at 36–56 (RLAVLFPIFGGVTLVLMYLAL) threads the bilayer. Residues 57–63 (RYLSKEY) are Lumenal-facing. The chain crosses the membrane as a helical span at residues 64–84 (IQLILQGYASLASIICFVRSF). At 85–89 (NPKTT) the chain is on the cytoplasmic side. The helical transmembrane segment at 90–106 (FGKITATMSSIAIALFY) threads the bilayer. Residues 107-111 (FKTKH) lie on the Lumenal side of the membrane. A helical membrane pass occupies residues 112–130 (WMASNILAWALAANSISIM). At 131–139 (RIDSYNTGA) the chain is on the cytoplasmic side. Residues 140-160 (LLLGALFFYDIYFVFGTEVMV) traverse the membrane as a helical segment. Residue Asp149 is part of the active site. Over 161-183 (TVATGIDIPAKYVLPQFKNPTRL) the chain is Lumenal. The chain crosses the membrane as a helical span at residues 184–204 (SMLGLGDIVMPGLMLALMYRF). Residue Asp190 is part of the active site. The Cytoplasmic portion of the chain corresponds to 205–221 (DLHYYINSTSQPKKHST). Residues 222–244 (YFRNTFIAYGLGLGVTNFALYYF) form a helical membrane-spanning segment. Residues 245–249 (KAAQP) lie on the Lumenal side of the membrane. The PAL signature appears at 249–251 (PAL). The chain crosses the membrane as a helical span at residues 250 to 268 (ALLYLSPACIVAPLLTAWY). Topologically, residues 269-295 (RDELKTLFSFRSETEDETDEQDKCKST) are cytoplasmic.

It belongs to the peptidase A22B family.

The protein resides in the endoplasmic reticulum membrane. Its subcellular location is the golgi apparatus membrane. The chain is Probable intramembrane protease C25B8.17 from Schizosaccharomyces pombe (strain 972 / ATCC 24843) (Fission yeast).